The primary structure comprises 1275 residues: Probable Rho-type GTPase-activating protein 2 (1275 aa).

Disordered stretches follow at residues 118–146, 213–238, 280–306, and 335–365; these read KYESTDSFPSSQPSRANSPQSDSYSSPYE, NTKRSHRSSEEPGASSPVTSPILKDS, SSFRRPITKPTPFNSDSNISIDPKDNN, and SSPRRKSISIVKPHGISSPKHSTNNLSSKSG. A compositionally biased stretch (polar residues) spans 122–143; that stretch reads TDSFPSSQPSRANSPQSDSYSS. 2 stretches are compositionally biased toward polar residues: residues 290–299 and 353–364; these read TPFNSDSNIS and PKHSTNNLSSKS. Ser-388 is subject to Phosphoserine. Disordered regions lie at residues 390-466 and 539-561; these read IIEN…RSSF and FSKSKSHNHHPSSQVEKSTSNSK. Polar residues-rich tracts occupy residues 450–466 and 552–561; these read SLSLQKTGSSDTRRSSF and QVEKSTSNSK. Residues 719–836 form the PH domain; sequence HAQKEGVLLK…WLRAILRQVP (118 aa). Basic and acidic residues predominate over residues 957–971; sequence ADTRRNQDAPEKHVP. Disordered stretches follow at residues 957 to 988 and 1254 to 1275; these read ADTRRNQDAPEKHVPVIEIQSSRPSLEKTDQS and NGAQNESDSDVSDDNGEDNEFF. Positions 1065-1275 constitute a Rho-GAP domain; the sequence is LPLNEAVNIS…DDNGEDNEFF (211 aa). A compositionally biased stretch (acidic residues) spans 1260–1275; the sequence is SDSDVSDDNGEDNEFF.

The protein resides in the nucleus. GTPase-activating protein for Rho-type proteins. The chain is Probable Rho-type GTPase-activating protein 2 (rga2) from Schizosaccharomyces pombe (strain 972 / ATCC 24843) (Fission yeast).